The following is a 683-amino-acid chain: Hexamerin 70b (683 aa).

A signal peptide spans 1 to 21; sequence MIVIMKAGFLFLASLCLLVQA. Residues 32 to 153 form the Hemocyanin N-terminal domain; that stretch reads VTRQKNIYEL…VAVIHRPDTK (122 aa). The Hemocyanin middle domain occupies 159–428; sequence PMYEVMPHLY…SIYKTILDYY (270 aa). Asn-203 carries N-linked (GlcNAc...) asparagine glycosylation. A Hemocyanin C-terminal domain is found at 437-673; sequence KYTTEELNFP…IHVKEVLVHH (237 aa).

The protein belongs to the hemocyanin/hexamerin family. As to quaternary structure, probable homohexamer. As to expression, expressed in the fat body and secreted into the hemolymph (at protein level). Present in trophocytes and oenocytes of the fat body (at protein level).

It is found in the secreted. It localises to the nucleus. The protein localises to the cytoplasm. Its subcellular location is the cytoplasmic granule. In terms of biological role, storage protein that may function as a nutrient supply to compensate for lack of dietary proteins during metamorphosis and egg production. The chain is Hexamerin 70b from Apis mellifera (Honeybee).